We begin with the raw amino-acid sequence, 255 residues long: Small ribosomal subunit protein eS1 (255 aa).

The segment covering 1-18 (MAVGKNKRLSKGKKGLKK) has biased composition (basic residues). Residues 1–28 (MAVGKNKRLSKGKKGLKKRTQDPFSRKD) are disordered. Ala2 carries the post-translational modification N-acetylalanine; partial. Residues 19–28 (RTQDPFSRKD) are compositionally biased toward basic and acidic residues.

The protein belongs to the eukaryotic ribosomal protein eS1 family. As to quaternary structure, component of the small ribosomal subunit. Mature ribosomes consist of a small (40S) and a large (60S) subunit. The 40S subunit contains about 33 different proteins and 1 molecule of RNA (18S). The 60S subunit contains about 49 different proteins and 3 molecules of RNA (25S, 5.8S and 5S).

The protein localises to the cytoplasm. The polypeptide is Small ribosomal subunit protein eS1 (Ajellomyces capsulatus (strain NAm1 / WU24) (Darling's disease fungus)).